The primary structure comprises 426 residues: 6-Hydroxy-7-prenyldeoxybrevianamide E synthase notC' (426 aa).

Glu94 contributes to the substrate binding site. Dimethylallyl diphosphate is bound by residues Arg105, Lys191, and Tyr193. Residue Tyr195 participates in substrate binding. Residues Lys267, Tyr269, Gln352, Tyr354, Tyr418, and Tyr422 each contribute to the dimethylallyl diphosphate site.

Belongs to the tryptophan dimethylallyltransferase family.

The enzyme catalyses 6-hydroxydeoxybrevianamide E + dimethylallyl diphosphate = notoamide S + diphosphate. It participates in alkaloid biosynthesis. In terms of biological role, prenyltransferase; part of the gene cluster that mediates the biosynthesis of notoamide, a fungal indole alkaloid that belongs to a family of natural products containing a characteristic bicyclo[2.2.2]diazaoctane core. The first step of notoamide biosynthesis involves coupling of L-proline and L-tryptophan by the bimodular NRPS notE', to produce cyclo-L-tryptophan-L-proline called brevianamide F. The reverse prenyltransferase notF' then acts as a deoxybrevianamide E synthase and converts brevianamide F to deoxybrevianamide E via reverse prenylation at C-2 of the indole ring leading to the bicyclo[2.2.2]diazaoctane core. Deoxybrevianamide E is further hydroxylated at C-6 of the indole ring, likely catalyzed by the cytochrome P450 monooxygenase notG', to yield 6-hydroxy-deoxybrevianamide E. 6-hydroxy-deoxybrevianamide E is a specific substrate of the prenyltransferase notC' for normal prenylation at C-7 to produce 6-hydroxy-7-prenyl-deoxybrevianamide, also called notoamide S. As the proposed pivotal branching point in notoamide biosynthesis, notoamide S can be diverted to notoamide E through an oxidative pyran ring closure putatively catalyzed by either notH' cytochrome P450 monooxygenase or the notD' FAD-linked oxidoreductase. This step would be followed by an indole 2,3-epoxidation-initiated pinacol-like rearrangement catalyzed by the notB' FAD-dependent monooxygenase leading to the formation of notoamide C and notoamide D. On the other hand notoamide S is converted to notoamide T by notH' (or notD'), a bifunctional oxidase that also functions as the intramolecular Diels-Alderase responsible for generation of (-)-notoamide T. To generate antipodal (+)-notoaminide T, notH (or notD) in Aspergillus strain MF297-2 is expected to catalyze a Diels-Alder reaction leading to the opposite stereochemistry. The remaining oxidoreductase notD' (or notH') likely catalyzes the oxidative pyran ring formation to yield (-)-stephacidin A. The FAD-dependent monooxygenase notI' is highly similar to notB' and is predicted to catalyze a similar conversion from (-)-stephacidin A to (+)-notoamide B via the 2,3-epoxidation of (-)-stephacidin A followed by a pinacol-type rearrangement. Finally, it remains unclear which enzyme could be responsible for the final hydroxylation steps leading to notoamide A and sclerotiamide. The protein is 6-Hydroxy-7-prenyldeoxybrevianamide E synthase notC' of Aspergillus versicolor.